A 1008-amino-acid polypeptide reads, in one-letter code: Kinesin-like protein KIN-5C (1008 aa).

One can recognise a Kinesin motor domain in the interval 12–359 (NVQVLLRCRP…LDYAHRAKSI (348 aa)). ATP is bound at residue 98–105 (GQTGTGKT). Residues 402–459 (KDRYQQEENERKAMADQIEQMTTSLEANQKQINDLQEKYDSELQHSADLSKKLEATEK) adopt a coiled-coil conformation. Disordered regions lie at residues 910–931 (VEAHLGESQHLQESHSSHTAGI), 943–962 (YKDYEPTGETPVRSEPEVPS), and 975–1008 (ESLMDEFRENHPYEPSKDRRPSLIPRSPLATINN). Positions 913–925 (HLGESQHLQESHS) are enriched in basic and acidic residues. Over residues 979–995 (DEFRENHPYEPSKDRRP) the composition is skewed to basic and acidic residues.

The protein belongs to the TRAFAC class myosin-kinesin ATPase superfamily. Kinesin family. KIN-5/BimC subfamily.

The protein localises to the cytoplasm. The protein resides in the cytoskeleton. Its subcellular location is the spindle. Its function is as follows. Responsible for microtubule translocation. May be important for the organization of phragmoplast-specific arrays of microtubules. Plays an essential role in stabilizing the mitotic spindle. Required during mitotic cytokinesis. This Oryza sativa subsp. japonica (Rice) protein is Kinesin-like protein KIN-5C.